The following is a 1152-amino-acid chain: Alpha-mannosidase 2x (1152 aa).

The Cytoplasmic segment spans residues 1-5 (MKLKK). The chain crosses the membrane as a helical; Signal-anchor for type II membrane protein span at residues 6-26 (QVTVCGAAIFCVAVFSLYLML). Residues 27–796 (DRVQHDPARH…VDEEQEQQME (770 aa)) are Lumenal-facing. A coiled-coil region spans residues 43-74 (PRSQISVLQNRIEQLEQLLEENHDIISRIKDS). Zn(2+)-binding residues include H175 and D177. A glycan (N-linked (GlcNAc...) asparagine) is linked at N225. Zn(2+) is bound at residue D289. The active-site Nucleophile is the D289. An N-linked (GlcNAc...) asparagine glycan is attached at N305. Position 569 (H569) interacts with Zn(2+).

It belongs to the glycosyl hydrolase 38 family. In terms of assembly, homodimer; disulfide-linked. Interacts with MGAT4D. Zn(2+) is required as a cofactor.

The protein localises to the golgi apparatus membrane. It catalyses the reaction N(4)-{beta-D-GlcNAc-(1-&gt;2)-alpha-D-Man-(1-&gt;3)-[alpha-D-Man-(1-&gt;3)-[alpha-D-Man-(1-&gt;6)]-alpha-D-Man-(1-&gt;6)]-beta-D-Man-(1-&gt;4)-beta-D-GlcNAc-(1-&gt;4)-beta-D-GlcNAc}-L-asparaginyl-[protein] + 2 H2O = 2 alpha-D-mannopyranose + an N(4)-{beta-D-GlcNAc-(1-&gt;2)-alpha-D-Man-(1-&gt;3)-[alpha-D-Man-(1-&gt;6)]-beta-D-Man-(1-&gt;4)-beta-D-GlcNAc-(1-&gt;4)-beta-D-GlcNAc}-L-asparaginyl-[protein]. Its pathway is protein modification; protein glycosylation. Its function is as follows. Catalyzes the first committed step in the biosynthesis of complex N-glycans. It controls conversion of high mannose to complex N-glycans; the final hydrolytic step in the N-glycan maturation pathway. The sequence is that of Alpha-mannosidase 2x (Man2a2) from Mus musculus (Mouse).